A 142-amino-acid polypeptide reads, in one-letter code: MAKKVQAYIKLQVSAGMANPSPPVGPALGQQGVNIMEFCKAFNAKTESVEKGLPIPVVITVIADRSFTFVTKTPPAAVLLKKAAGVKSGSGKPNKEKVGKITSAQVREIAETKAADLTGADVEAMMRSIAGTARSMGLVVED.

Belongs to the universal ribosomal protein uL11 family. As to quaternary structure, part of the ribosomal stalk of the 50S ribosomal subunit. Interacts with L10 and the large rRNA to form the base of the stalk. L10 forms an elongated spine to which L12 dimers bind in a sequential fashion forming a multimeric L10(L12)X complex. One or more lysine residues are methylated.

Forms part of the ribosomal stalk which helps the ribosome interact with GTP-bound translation factors. The polypeptide is Large ribosomal subunit protein uL11 (Proteus vulgaris).